A 476-amino-acid chain; its full sequence is Chromosomal replication initiator protein DnaA (476 aa).

The tract at residues 1–75 (MLAPDTFWLA…TQMAENHFAR (75 aa)) is domain I, interacts with DnaA modulators. A domain II region spans residues 75–139 (RPVQLQLELA…AKEKQEKNPT (65 aa)). The disordered stretch occupies residues 110–141 (FDAPTESAQKAPKDTKDTKDAKEKQEKNPTRL). Over residues 120-138 (APKDTKDTKDAKEKQEKNP) the composition is skewed to basic and acidic residues. The segment at 140 to 356 (RLNPSFTFNT…GALKRVVAYS (217 aa)) is domain III, AAA+ region. Positions 184, 186, 187, and 188 each coordinate ATP. Residues 357–476 (RFTGHALTLD…FNTLLHILRG (120 aa)) form a domain IV, binds dsDNA region.

The protein belongs to the DnaA family. As to quaternary structure, oligomerizes as a right-handed, spiral filament on DNA at oriC.

It is found in the cytoplasm. Plays an essential role in the initiation and regulation of chromosomal replication. ATP-DnaA binds to the origin of replication (oriC) to initiate formation of the DNA replication initiation complex once per cell cycle. Binds the DnaA box (a 9 base pair repeat at the origin) and separates the double-stranded (ds)DNA. Forms a right-handed helical filament on oriC DNA; dsDNA binds to the exterior of the filament while single-stranded (ss)DNA is stabiized in the filament's interior. The ATP-DnaA-oriC complex binds and stabilizes one strand of the AT-rich DNA unwinding element (DUE), permitting loading of DNA polymerase. After initiation quickly degrades to an ADP-DnaA complex that is not apt for DNA replication. Binds acidic phospholipids. The protein is Chromosomal replication initiator protein DnaA of Nitrosospira multiformis (strain ATCC 25196 / NCIMB 11849 / C 71).